The chain runs to 114 residues: uncharacterized protein (114 aa).

The segment at 1–114 (MSTAASSRMR…HASQSPDTAY (114 aa)) is disordered. The segment covering 32-43 (CRRVPSRPCRPV) has biased composition (low complexity).

This is an uncharacterized protein from Human adenovirus B serotype 7 (HAdV-7).